A 436-amino-acid polypeptide reads, in one-letter code: 3-ketoacyl-CoA thiolase (436 aa).

The Acyl-thioester intermediate role is filled by Cys-99. Residues His-392 and Cys-422 each act as proton acceptor in the active site.

This sequence belongs to the thiolase-like superfamily. Thiolase family. Heterotetramer of two alpha chains (FadJ) and two beta chains (FadI).

Its subcellular location is the cytoplasm. The enzyme catalyses an acyl-CoA + acetyl-CoA = a 3-oxoacyl-CoA + CoA. Its pathway is lipid metabolism; fatty acid beta-oxidation. Its function is as follows. Catalyzes the final step of fatty acid oxidation in which acetyl-CoA is released and the CoA ester of a fatty acid two carbons shorter is formed. This chain is 3-ketoacyl-CoA thiolase, found in Escherichia coli (strain SMS-3-5 / SECEC).